The chain runs to 336 residues: Inositol 2-dehydrogenase (336 aa).

It belongs to the Gfo/Idh/MocA family. Homotetramer.

The catalysed reaction is myo-inositol + NAD(+) = scyllo-inosose + NADH + H(+). Its function is as follows. Involved in the oxidation of myo-inositol (MI) to 2-keto-myo-inositol (2KMI or 2-inosose). The polypeptide is Inositol 2-dehydrogenase (Pseudomonas fluorescens (strain ATCC BAA-477 / NRRL B-23932 / Pf-5)).